Consider the following 861-residue polypeptide: Leucine--tRNA ligase (861 aa).

The 'HIGH' region motif lies at 42–52 (PYPSGRLHMGH). The 'KMSKS' region motif lies at 619–623 (KMSKS). Position 622 (Lys-622) interacts with ATP.

This sequence belongs to the class-I aminoacyl-tRNA synthetase family.

The protein resides in the cytoplasm. The enzyme catalyses tRNA(Leu) + L-leucine + ATP = L-leucyl-tRNA(Leu) + AMP + diphosphate. This chain is Leucine--tRNA ligase, found in Haemophilus influenzae (strain ATCC 51907 / DSM 11121 / KW20 / Rd).